The chain runs to 186 residues: ATP synthase subunit delta (186 aa).

This sequence belongs to the ATPase delta chain family. As to quaternary structure, F-type ATPases have 2 components, F(1) - the catalytic core - and F(0) - the membrane proton channel. F(1) has five subunits: alpha(3), beta(3), gamma(1), delta(1), epsilon(1). CF(0) has four main subunits: a(1), b(1), b'(1) and c(10-14). The alpha and beta chains form an alternating ring which encloses part of the gamma chain. F(1) is attached to F(0) by a central stalk formed by the gamma and epsilon chains, while a peripheral stalk is formed by the delta, b and b' chains.

The protein localises to the cell inner membrane. Its function is as follows. F(1)F(0) ATP synthase produces ATP from ADP in the presence of a proton or sodium gradient. F-type ATPases consist of two structural domains, F(1) containing the extramembraneous catalytic core and F(0) containing the membrane proton channel, linked together by a central stalk and a peripheral stalk. During catalysis, ATP synthesis in the catalytic domain of F(1) is coupled via a rotary mechanism of the central stalk subunits to proton translocation. This protein is part of the stalk that links CF(0) to CF(1). It either transmits conformational changes from CF(0) to CF(1) or is implicated in proton conduction. The protein is ATP synthase subunit delta of Rhodopseudomonas palustris (strain ATCC BAA-98 / CGA009).